A 407-amino-acid polypeptide reads, in one-letter code: Glucan 1,3-beta-glucosidase 1 (407 aa).

The signal sequence occupies residues 1–22 (MLSFTSVFSFFLHALLLKTAFS). Glu213 (proton donor) is an active-site residue. A disulfide bridge links Cys295 with Cys406. Glu312 (nucleophile) is an active-site residue.

This sequence belongs to the glycosyl hydrolase 5 (cellulase A) family.

Its subcellular location is the secreted. It catalyses the reaction Successive hydrolysis of beta-D-glucose units from the non-reducing ends of (1-&gt;3)-beta-D-glucans, releasing alpha-glucose.. In terms of biological role, beta-glucanases participate in the metabolism of beta-glucan, the main structural component of the cell wall. It could also function biosynthetically as a transglycosylase. This chain is Glucan 1,3-beta-glucosidase 1 (exg1), found in Schizosaccharomyces pombe (strain 972 / ATCC 24843) (Fission yeast).